A 93-amino-acid chain; its full sequence is MPRSLKKGPYVNYKLIKKIILNNLNLKKKKIIKTWSRSSTITPEFIGNTIAVHNGKIFIPIYISENMVGHKLGEFAPTRIFRGHSGSKKKPKK.

This sequence belongs to the universal ribosomal protein uS19 family.

Protein S19 forms a complex with S13 that binds strongly to the 16S ribosomal RNA. This chain is Small ribosomal subunit protein uS19, found in Karelsulcia muelleri (strain GWSS) (Sulcia muelleri).